The following is a 148-amino-acid chain: MLKLICLRNFNTFSILGVVDSLNNGKNINKIISKKDMTLKEIVLYLPKFELEDDVDLKDALIHMGCNDLFKSGELVGISDTKTLRIGNIRQKSVIKVDEYGTEAASVTESCTTDGIKKIPIVKANVPFMFLVADVQTKIPLFLGIFQG.

This sequence belongs to the serpin family. Poxviruses subfamily.

This is an uncharacterized protein from Fowlpox virus (strain NVSL) (FPV).